Reading from the N-terminus, the 178-residue chain is MAPQSNNSTTFVSKTQHYLKVKKPLLERQRRARMNKCLDTLKTLVAEFQGDDAILRMDKAEMLEAALVFMRKQVVKQQAPVSPLPMDSFKNGYMNAVSEISRVMACTPAMSVDVGKTVMTHLGVEFQRMLQADQVQTSVTTSTPRPLSPASSGYHSDNEDSQSAASPKPVEETMWRPW.

The region spanning 18 to 73 is the bHLH domain; the sequence is YLKVKKPLLERQRRARMNKCLDTLKTLVAEFQGDDAILRMDKAEMLEAALVFMRKQ. The Orange domain maps to 89 to 122; sequence FKNGYMNAVSEISRVMACTPAMSVDVGKTVMTHL. The span at 135–165 shows a compositional bias: polar residues; that stretch reads VQTSVTTSTPRPLSPASSGYHSDNEDSQSAA. Positions 135 to 178 are disordered; sequence VQTSVTTSTPRPLSPASSGYHSDNEDSQSAASPKPVEETMWRPW. Over residues 169-178 the composition is skewed to basic and acidic residues; it reads PVEETMWRPW. The WRPW motif motif lies at 175-178; that stretch reads WRPW.

In terms of assembly, transcription repression requires formation of a complex with a corepressor protein (Groucho). Forms homodimers.

It is found in the nucleus. Participates in the control of cell fate choice by uncommitted neuroectodermal cells in the embryo. Transcriptional repressor. Binds DNA on N-box motifs: 5'-CACNAG-3'. This Drosophila melanogaster (Fruit fly) protein is Enhancer of split m5 protein.